Consider the following 66-residue polypeptide: uncharacterized protein (66 aa).

Residues 1 to 20 are compositionally biased toward low complexity; it reads MTIINSISNFGSNNSFSNNN. The interval 1-47 is disordered; that stretch reads MTIINSISNFGSNNSFSNNNTVNQKSVIKRSKQMKNDNTSIGSSFKN. Positions 36 to 47 are enriched in polar residues; the sequence is NDNTSIGSSFKN.

This is an uncharacterized protein from Dictyostelium discoideum (Social amoeba).